Consider the following 567-residue polypeptide: Urease subunit alpha (567 aa).

The Urease domain maps to 129-567 (GGVDTHIHWI…LPMAQRYFLF (439 aa)). 3 residues coordinate Ni(2+): histidine 134, histidine 136, and lysine 217. Lysine 217 carries the N6-carboxylysine modification. Histidine 219 is a substrate binding site. The Ni(2+) site is built by histidine 246 and histidine 272. Histidine 320 acts as the Proton donor in catalysis. Position 360 (aspartate 360) interacts with Ni(2+).

It belongs to the metallo-dependent hydrolases superfamily. Urease alpha subunit family. Heterotrimer of UreA (gamma), UreB (beta) and UreC (alpha) subunits. Three heterotrimers associate to form the active enzyme. It depends on Ni cation as a cofactor. Post-translationally, carboxylation allows a single lysine to coordinate two nickel ions.

It localises to the cytoplasm. It catalyses the reaction urea + 2 H2O + H(+) = hydrogencarbonate + 2 NH4(+). The protein operates within nitrogen metabolism; urea degradation; CO(2) and NH(3) from urea (urease route): step 1/1. The polypeptide is Urease subunit alpha (Escherichia coli O157:H7).